The primary structure comprises 741 residues: Eukaryotic peptide chain release factor GTP-binding subunit (741 aa).

The interval 5-135 (QQQQQQFNAN…SYNNNNNYNN (131 aa)) is several sort of repeats. Positions 59 to 161 (QQFGQYGQQQ…DQQQETGSGQ (103 aa)) are enriched in low complexity. Disordered stretches follow at residues 59–186 (QQFG…KKVL) and 199–264 (IVTK…KTEA). Residues 162-311 (MSLEDYQKQQ…EQIDASIVND (150 aa)) form a charged region. Composition is skewed to basic and acidic residues over residues 166–175 (DYQKQQKESL) and 202–241 (KKKE…ESKV). In terms of domain architecture, tr-type G spans 316 to 541 (KDHMSIIFMG…YLDSMPLAVR (226 aa)). The segment at 325–332 (GHVDAGKS) is G1. 325–332 (GHVDAGKS) serves as a coordination point for GTP. The segment at 381–385 (GKTIE) is G2. Thr399 is subject to Phosphothreonine. The interval 402-405 (DAPG) is G3. Residues 402–406 (DAPGH) and 464–467 (NKMD) each bind GTP. The segment at 464-467 (NKMD) is G4. The segment at 505–507 (SGY) is G5.

Belongs to the TRAFAC class translation factor GTPase superfamily. Classic translation factor GTPase family. ERF3 subfamily.

It localises to the cytoplasm. Involved in translation termination. Stimulates the activity of ERF1. Binds guanine nucleotides. The sequence is that of Eukaryotic peptide chain release factor GTP-binding subunit (SUP2) from Ogataea pini (Yeast).